The primary structure comprises 453 residues: Malate dehydrogenase [NADP], chloroplastic (453 aa).

A chloroplast-targeting transit peptide spans 1 to 68 (MAVVKLSPWA…RLSSPASIRC (68 aa)). Residues Cys88 and Cys93 are joined by a disulfide bond. NADP(+) is bound at residue 117-123 (GAAGMIS). Residues Arg198 and Arg204 each contribute to the substrate site. NADP(+) is bound by residues Asn211, Gln218, and 235 to 237 (VGN). Residues Asn237 and Arg268 each contribute to the substrate site. His293 functions as the Proton acceptor in the catalytic mechanism. A disulfide bridge links Cys429 with Cys441.

Belongs to the LDH/MDH superfamily. MDH type 2 family. Homodimer.

The protein localises to the plastid. The protein resides in the chloroplast. The enzyme catalyses (S)-malate + NADP(+) = oxaloacetate + NADPH + H(+). Chloroplast NADP-MDH is activated upon illumination. In order to be enzymatically active, disulfide bridges on the protein must be reduced by thioredoxin which receives electrons from ferredoxin and the electron transport system of photosynthesis. The chloroplastic, NADP-dependent form is essential for the photosynthesis C4 cycle, which allows plants to circumvent the problem of photorespiration. In C4 plants, NADP-MDH activity acts to convert oxaloacetate to malate in chloroplasts of mesophyll cells for transport to the bundle sheath cells. The protein is Malate dehydrogenase [NADP], chloroplastic of Flaveria bidentis (Coastal plain yellowtops).